The sequence spans 51 residues: Large ribosomal subunit protein eL39 (51 aa).

It belongs to the eukaryotic ribosomal protein eL39 family.

This chain is Large ribosomal subunit protein eL39 (rpl39e), found in Pyrococcus abyssi (strain GE5 / Orsay).